Consider the following 286-residue polypeptide: 4-hydroxybenzoate octaprenyltransferase (286 aa).

The next 8 membrane-spanning stretches (helical) occupy residues 20–40, 43–63, 96–116, 142–162, 167–187, 210–230, 235–255, and 266–286; these read IGTL…AQGL, IKVL…GCII, LFTL…PLVV, FLGI…LGEV, WWLF…YAIV, QIIG…GLVA, IYGL…RLIF, and FLNN…DYMI.

Belongs to the UbiA prenyltransferase family. The cofactor is Mg(2+).

Its subcellular location is the cell inner membrane. It catalyses the reaction all-trans-octaprenyl diphosphate + 4-hydroxybenzoate = 4-hydroxy-3-(all-trans-octaprenyl)benzoate + diphosphate. Its pathway is cofactor biosynthesis; ubiquinone biosynthesis. Its function is as follows. Catalyzes the prenylation of para-hydroxybenzoate (PHB) with an all-trans polyprenyl group. Mediates the second step in the final reaction sequence of ubiquinone-8 (UQ-8) biosynthesis, which is the condensation of the polyisoprenoid side chain with PHB, generating the first membrane-bound Q intermediate 3-octaprenyl-4-hydroxybenzoate. The chain is 4-hydroxybenzoate octaprenyltransferase from Shewanella frigidimarina (strain NCIMB 400).